Reading from the N-terminus, the 228-residue chain is Prophenin-2 (228 aa).

The N-terminal stretch at 1 to 29 (METQRASLCLGRWSLWLLLLALVVPSASA) is a signal peptide. Residues 30 to 146 (QALSYREAVL…FLRRPRLRRQ (117 aa)) constitute a propeptide that is removed on maturation. 2 cysteine pairs are disulfide-bonded: cysteine 85–cysteine 96 and cysteine 107–cysteine 124. Repeat copies occupy residues 148 to 157 (FPPPNVPGPR), 158 to 167 (FPPPNVPGPR), 168 to 177 (FPPPNFPGPR), 178 to 187 (FPPPNFPGPR), 188 to 197 (FPPPNFPGPP), 198 to 207 (FPPPIFPGPW), and 208 to 217 (FPPPPPFRPP). A 7 X 10 AA tandem repeats region spans residues 148-217 (FPPPNVPGPR…FPPPPPFRPP (70 aa)). Disordered stretches follow at residues 167–195 (RFPP…NFPG) and 207–228 (WFPP…PGRR). Position 225 is a proline amide (proline 225). The propeptide at 226 to 228 (GRR) is removed in mature form.

It belongs to the cathelicidin family.

Its subcellular location is the secreted. In terms of biological role, exerts antimicrobial activity. It is more effective against Gram-negative bacteria than Gram-positive bacteria. The chain is Prophenin-2 from Sus scrofa (Pig).